We begin with the raw amino-acid sequence, 583 residues long: MDLLPPKPKYNPLRNESLSSLEEGASGSTPPEELPSPSASSLGPILPPLPGDDSPTTLCSFFPRMSNLRLANPAGGRPGSKGEPGRAADDGEGIVGAAMPDSGPLPLLRDMNKLSGGGGRRTRVEGGQLGGEEWTRHGSFVNKPTRGWLHPNDKVMGPGVSYLVRYMGCVEVLQSMRALDFNTRTQVTREAISLVCEAVPGAKGATRRRKPCSRPLSSILGRSNLKFAGMPITLTVSTSSLNLMAADCKQIIANHHMQSISFASGGDPDTAEYVAYVAKDPVNQRACHILECPEGLAQDVISTIGQAFELRFKQYLRNPPKLVTPHDRMAGFDGSAWDEEEEEPPDHQYYNDFPGKEPPLGGVVDMRLREGAAPGAARSTAPSAQTPSHLGATLPVGQPVGGDPEVRKQMPPPPPCPGRELFDDPSYVNVQNLDKARQAVGGAGPPNPAVNGSAPRDLFDMRPFEDALRVPPPPQSVSMAEQLRGEPWFHGKLSRREAEALLQLNGDFLVRESTTTPGQYVLTGLQSGQPKHLLLVDPEGVVRTKDHRFESVSHLIGYHMDNHLPIISAGSELCLQQPVERKL.

Met-1 is modified (N-acetylmethionine). 2 disordered regions span residues 1–92 (MDLL…DDGE) and 113–137 (KLSGGGGRRTRVEGGQLGGEEWTRH). Residues 16 to 44 (ESLSSLEEGASGSTPPEELPSPSASSLGP) are compositionally biased toward low complexity. The residue at position 36 (Ser-36) is a Phosphoserine. A Phosphoserine modification is found at Ser-139. Lys-154 is modified (N6-acetyllysine). In terms of domain architecture, PID spans 156–339 (MGPGVSYLVR…AGFDGSAWDE (184 aa)). Positions 340 to 487 (EEEEPPDHQY…SMAEQLRGEP (148 aa)) are CH1. Residues Tyr-349 and Tyr-350 each carry the phosphotyrosine modification. The tract at residues 372–416 (AAPGAARSTAPSAQTPSHLGATLPVGQPVGGDPEVRKQMPPPPPC) is disordered. Position 427 is a phosphotyrosine (Tyr-427). Residue Ser-453 is modified to Phosphoserine. The SH2 domain occupies 488–579 (WFHGKLSRRE…GSELCLQQPV (92 aa)).

In terms of assembly, interacts with CPNE3; this interaction may mediate the binding of CPNE3 with ERBB2. Interacts with the Trk receptors NTRK1, NTRK2 and NTRK3; in a phosphotyrosine-dependent manner. Interacts with the NPXY motif of tyrosine-phosphorylated IGF1R and INSR in vitro via the PID domain. Once activated, binds to GRB2. Interacts with tyrosine-phosphorylated CD3T and DDR2. Interacts with the N-terminal region of APS. Interacts with phosphorylated LRP1 and IRS4. Interacts with INPP5D/SHIP1 and INPPL1/SHIP2. Interacts with ALK, GAB2, GRB7 and KIT. Interacts with PTPN6/SHP (tyrosine phosphorylated). Identified in a complex containing FGFR4, NCAM1, CDH2, PLCG1, FRS2, SRC, SHC1, GAP43 and CTTN. Interacts with FLT4 (tyrosine-phosphorylated). Interacts with EPHB1 and GRB2; activates the MAPK/ERK cascade to regulate cell migration. Interacts with PDGFRB (tyrosine-phosphorylated). Interacts with ERBB4. Interacts with TEK/TIE2 (tyrosine-phosphorylated). Interacts with PTK2/FAK1. Interacts with CEACAM1; this interaction is CEACAM1-phosphorylation-dependent and mediates interaction with EGFR or INSR resulting in decrease coupling of SHC1 to the MAPK3/ERK1-MAPK1/ERK2 pathway. Interacts (via PID domain) with PEAK1 (when phosphorylated). Found in a complex with PPP1CA, PPP1CC, SHC1 and PEAK1. In terms of processing, phosphorylated by activated epidermal growth factor receptor. Phosphorylated in response to KIT signaling. Tyrosine phosphorylated in response to FLT3 and FLT4 signaling and by ligand-activated ALK. Tyrosine phosphorylated by ligand-activated PDGFRB. Tyrosine phosphorylated by TEK/TIE2. May be tyrosine phosphorylated by activated PTK2/FAK1. Tyrosine phosphorylated by activated PTK2B/PYK2. Dephosphorylation by PTPN2 may regulate interaction with GRB2.

The protein resides in the cytoplasm. The protein localises to the cell junction. Its subcellular location is the focal adhesion. Signaling adapter that couples activated growth factor receptors to signaling pathways. Participates in a signaling cascade initiated by activated KIT and KITLG/SCF. Participates in signaling downstream of the angiopoietin receptor TEK/TIE2, and plays a role in the regulation of endothelial cell migration and sprouting angiogenesis. The protein is SHC-transforming protein 1 (SHC1) of Pongo abelii (Sumatran orangutan).